Here is a 229-residue protein sequence, read N- to C-terminus: uncharacterized protein (229 aa).

To T.pallidum TP_0315, TP_0618 and TP_0619.

This is an uncharacterized protein from Treponema pallidum (strain Nichols).